The sequence spans 75 residues: UPF0270 protein PFL_4336 (75 aa).

The protein belongs to the UPF0270 family.

This is UPF0270 protein PFL_4336 from Pseudomonas fluorescens (strain ATCC BAA-477 / NRRL B-23932 / Pf-5).